Here is a 160-residue protein sequence, read N- to C-terminus: 6,7-dimethyl-8-ribityllumazine synthase (160 aa).

5-amino-6-(D-ribitylamino)uracil-binding positions include tryptophan 28, 59 to 61 (ALE), and 81 to 83 (CVI). 86 to 87 (ET) is a (2S)-2-hydroxy-3-oxobutyl phosphate binding site. The active-site Proton donor is the histidine 89. Asparagine 114 lines the 5-amino-6-(D-ribitylamino)uracil pocket. Arginine 128 is a (2S)-2-hydroxy-3-oxobutyl phosphate binding site.

Belongs to the DMRL synthase family.

The catalysed reaction is (2S)-2-hydroxy-3-oxobutyl phosphate + 5-amino-6-(D-ribitylamino)uracil = 6,7-dimethyl-8-(1-D-ribityl)lumazine + phosphate + 2 H2O + H(+). The protein operates within cofactor biosynthesis; riboflavin biosynthesis; riboflavin from 2-hydroxy-3-oxobutyl phosphate and 5-amino-6-(D-ribitylamino)uracil: step 1/2. Its function is as follows. Catalyzes the formation of 6,7-dimethyl-8-ribityllumazine by condensation of 5-amino-6-(D-ribitylamino)uracil with 3,4-dihydroxy-2-butanone 4-phosphate. This is the penultimate step in the biosynthesis of riboflavin. This chain is 6,7-dimethyl-8-ribityllumazine synthase, found in Corynebacterium urealyticum (strain ATCC 43042 / DSM 7109).